A 1435-amino-acid polypeptide reads, in one-letter code: Protein SPP41 (1435 aa).

Disordered regions lie at residues 16 to 74, 88 to 265, 286 to 309, 322 to 424, 442 to 482, 519 to 708, and 934 to 972; these read VGNL…NIEI, VANA…ENTL, AKQT…VEAQ, ELLS…DDEF, ETST…DSLD, SVSD…MKVP, and QQLD…AGHT. A compositionally biased stretch (acidic residues) spans 27–42; the sequence is GQEEGEVQGGEQEGDD. 3 stretches are compositionally biased toward basic and acidic residues: residues 53 to 63, 98 to 127, and 139 to 154; these read IEPKHPDDSQH, EQAK…KEQQ, and LKSD…ERRV. The UIM domain maps to 171–190; the sequence is QDDENLRMAILESLQELNTN. Over residues 196–205 the composition is skewed to basic and acidic residues; the sequence is EPEKHEHAAP. Positions 211–223 are enriched in basic residues; that stretch reads SKKSSKKKKKDKS. Residues 224-234 are compositionally biased toward basic and acidic residues; it reads KNRESSKDKSS. Residues 235-249 are compositionally biased toward basic residues; sequence KKSKSSSHSKKHAKD. Over residues 286–301 the composition is skewed to polar residues; that stretch reads AKQTVDIQDNSHTDNT. Positions 345–355 are enriched in basic and acidic residues; the sequence is KAVEPPRKPTA. The segment covering 367 to 383 has biased composition (basic residues); it reads KPKKRPPQEKKKTKSKT. The span at 384-398 shows a compositional bias: low complexity; sequence SKAASTANKSPASES. Composition is skewed to polar residues over residues 442–451 and 459–482; these read ETSTHTATQD and DFTS…DSLD. 3 stretches are compositionally biased toward basic and acidic residues: residues 524–548, 610–628, and 637–652; these read LPHD…EKKT, KNKE…AREE, and KQRL…KIVE. Residues 665–674 are compositionally biased toward basic residues; it reads KSGKPKKPYR. Basic and acidic residues predominate over residues 676-691; it reads WTPEELLKRSQEAEKP. Residues 683 to 699 carry the Nuclear localization signal motif; the sequence is KRSQEAEKPRKVKKERK. The span at 692 to 706 shows a compositional bias: basic residues; it reads RKVKKERKKKEKKMK. Residue Lys981 forms a Glycyl lysine isopeptide (Lys-Gly) (interchain with G-Cter in SUMO) linkage. A compositionally biased stretch (basic and acidic residues) spans 1005-1014; that stretch reads KLELTKRAES. The segment at 1005–1125 is disordered; that stretch reads KLELTKRAES…DSVNTTTGKP (121 aa). Ser1014 carries the post-translational modification Phosphoserine. Polar residues predominate over residues 1021-1032; sequence NVETAKETQSVQ. 2 stretches are compositionally biased toward basic and acidic residues: residues 1033-1082 and 1091-1103; these read EIKE…EKIA and LSDK…KSTL. Phosphoserine is present on Ser1067. Positions 1108–1123 are enriched in polar residues; that stretch reads AQLTGNEPDSVNTTTG. A Glycyl lysine isopeptide (Lys-Gly) (interchain with G-Cter in SUMO) cross-link involves residue Lys1154.

In terms of assembly, interacts with PRP8 and RAP1.

It localises to the nucleus. Negative regulator of PRP3 and PRP4 genes. In Saccharomyces cerevisiae (strain ATCC 204508 / S288c) (Baker's yeast), this protein is Protein SPP41 (SPP41).